Consider the following 207-residue polypeptide: Large ribosomal subunit protein bL17m (207 aa).

Over residues 173-200 the composition is skewed to basic and acidic residues; sequence EKESEHARLKEDHEDEKTVKKDWKRGDP. The interval 173 to 207 is disordered; sequence EKESEHARLKEDHEDEKTVKKDWKRGDPIPRPTYI.

This sequence belongs to the bacterial ribosomal protein bL17 family. Component of the mitochondrial large ribosomal subunit (mt-LSU). Mature yeast 74S mitochondrial ribosomes consist of a small (37S) and a large (54S) subunit. The 37S small subunit contains a 15S ribosomal RNA (15S mt-rRNA) and at least 32 different proteins. The 54S large subunit contains a 21S rRNA (21S mt-rRNA) and at least 45 different proteins.

The protein localises to the mitochondrion. Component of the mitochondrial ribosome (mitoribosome), a dedicated translation machinery responsible for the synthesis of mitochondrial genome-encoded proteins, including at least some of the essential transmembrane subunits of the mitochondrial respiratory chain. The mitoribosomes are attached to the mitochondrial inner membrane and translation products are cotranslationally integrated into the membrane. This chain is Large ribosomal subunit protein bL17m (mrpl8), found in Schizosaccharomyces pombe (strain 972 / ATCC 24843) (Fission yeast).